The primary structure comprises 806 residues: Phenylalanine--tRNA ligase beta subunit (806 aa).

The tRNA-binding domain occupies 40–155; that stretch reads NKGVKGVVVG…SDAEVGADAL (116 aa). Residues 409–484 form the B5 domain; that stretch reads VQERTVSVTA…RLYGYDHIPV (76 aa). Residues Asp-462, Asp-468, Glu-471, and Glu-472 each coordinate Mg(2+). One can recognise an FDX-ACB domain in the interval 712–805; that stretch reads PRFPSMTRDM…VEEKFGAELR (94 aa).

It belongs to the phenylalanyl-tRNA synthetase beta subunit family. Type 1 subfamily. In terms of assembly, tetramer of two alpha and two beta subunits. Requires Mg(2+) as cofactor.

The protein resides in the cytoplasm. The catalysed reaction is tRNA(Phe) + L-phenylalanine + ATP = L-phenylalanyl-tRNA(Phe) + AMP + diphosphate + H(+). This is Phenylalanine--tRNA ligase beta subunit from Bacillus cereus (strain ZK / E33L).